The primary structure comprises 308 residues: Porphobilinogen deaminase (308 aa).

At Cys241 the chain carries S-(dipyrrolylmethanemethyl)cysteine.

Belongs to the HMBS family. In terms of assembly, monomer. Dipyrromethane serves as cofactor.

The catalysed reaction is 4 porphobilinogen + H2O = hydroxymethylbilane + 4 NH4(+). The protein operates within porphyrin-containing compound metabolism; protoporphyrin-IX biosynthesis; coproporphyrinogen-III from 5-aminolevulinate: step 2/4. In terms of biological role, tetrapolymerization of the monopyrrole PBG into the hydroxymethylbilane pre-uroporphyrinogen in several discrete steps. In Staphylococcus aureus (strain MSSA476), this protein is Porphobilinogen deaminase.